The sequence spans 294 residues: Ribosomal RNA small subunit methyltransferase H (294 aa).

S-adenosyl-L-methionine-binding positions include 36–38, Asp55, Phe82, Asp97, and Gln104; that span reads GGH. A disordered region spans residues 265 to 285; sequence KPTVATDDEQNRNPRSRSAKW.

This sequence belongs to the methyltransferase superfamily. RsmH family.

It localises to the cytoplasm. The catalysed reaction is cytidine(1402) in 16S rRNA + S-adenosyl-L-methionine = N(4)-methylcytidine(1402) in 16S rRNA + S-adenosyl-L-homocysteine + H(+). In terms of biological role, specifically methylates the N4 position of cytidine in position 1402 (C1402) of 16S rRNA. This chain is Ribosomal RNA small subunit methyltransferase H, found in Synechococcus sp. (strain CC9902).